Here is a 452-residue protein sequence, read N- to C-terminus: Tubulin beta-2 chain (452 aa).

Residues Gln11, Glu72, Ser141, Gly145, Thr146, Gly147, Asn207, and Asn229 each contribute to the GTP site. Glu72 is a binding site for Mg(2+). Residues 414 to 452 form a disordered region; it reads AESNMNDPVAEYQQYQDATADDEEEYDDEAADDHHQYES. A compositionally biased stretch (acidic residues) spans 432 to 444; that stretch reads TADDEEEYDDEAA.

The protein belongs to the tubulin family. As to quaternary structure, dimer of alpha and beta chains. A typical microtubule is a hollow water-filled tube with an outer diameter of 25 nm and an inner diameter of 15 nM. Alpha-beta heterodimers associate head-to-tail to form protofilaments running lengthwise along the microtubule wall with the beta-tubulin subunit facing the microtubule plus end conferring a structural polarity. Microtubules usually have 13 protofilaments but different protofilament numbers can be found in some organisms and specialized cells. Mg(2+) serves as cofactor.

It localises to the cytoplasm. The protein localises to the cytoskeleton. Functionally, tubulin is the major constituent of microtubules, a cylinder consisting of laterally associated linear protofilaments composed of alpha- and beta-tubulin heterodimers. Microtubules grow by the addition of GTP-tubulin dimers to the microtubule end, where a stabilizing cap forms. Below the cap, tubulin dimers are in GDP-bound state, owing to GTPase activity of alpha-tubulin. In Solanum tuberosum (Potato), this protein is Tubulin beta-2 chain (TUBB2).